The following is a 254-amino-acid chain: Zinc import ATP-binding protein ZnuC (254 aa).

An ABC transporter domain is found at 5-221 (ICAADLSVSH…PAYRALFGSE (217 aa)). 38 to 45 (GPNGSGKS) lines the ATP pocket. The segment covering 234–245 (DHDHDHVAEGHR) has biased composition (basic and acidic residues). The disordered stretch occupies residues 234–254 (DHDHDHVAEGHRHGPACAHPH).

Belongs to the ABC transporter superfamily. Zinc importer (TC 3.A.1.15.5) family. As to quaternary structure, the complex is composed of two ATP-binding proteins (ZnuC), two transmembrane proteins (ZnuB) and a solute-binding protein (ZnuA).

The protein localises to the cell inner membrane. The enzyme catalyses Zn(2+)(out) + ATP(in) + H2O(in) = Zn(2+)(in) + ADP(in) + phosphate(in) + H(+)(in). In terms of biological role, part of the ABC transporter complex ZnuABC involved in zinc import. Responsible for energy coupling to the transport system. The protein is Zinc import ATP-binding protein ZnuC of Paracoccus denitrificans (strain Pd 1222).